We begin with the raw amino-acid sequence, 218 residues long: Small ribosomal subunit protein uS5 (218 aa).

Positions 1–45 are disordered; that stretch reads MPGRQRRDGGNGPAGQNSNGPEGRDNRRGGGDRRGGGDRRDNAAE. A compositionally biased stretch (basic and acidic residues) spans 22–45; sequence EGRDNRRGGGDRRGGGDRRDNAAE. The S5 DRBM domain occupies 48–111; sequence QLERVVAINR…EEARKGFFRV (64 aa).

This sequence belongs to the universal ribosomal protein uS5 family. Part of the 30S ribosomal subunit. Contacts proteins S4 and S8.

Its function is as follows. With S4 and S12 plays an important role in translational accuracy. Located at the back of the 30S subunit body where it stabilizes the conformation of the head with respect to the body. This Nocardia farcinica (strain IFM 10152) protein is Small ribosomal subunit protein uS5.